A 206-amino-acid polypeptide reads, in one-letter code: Small ribosomal subunit protein uS4 (206 aa).

The S4 RNA-binding domain maps to glycine 96–glutamine 156.

The protein belongs to the universal ribosomal protein uS4 family. As to quaternary structure, part of the 30S ribosomal subunit. Contacts protein S5. The interaction surface between S4 and S5 is involved in control of translational fidelity.

Functionally, one of the primary rRNA binding proteins, it binds directly to 16S rRNA where it nucleates assembly of the body of the 30S subunit. Its function is as follows. With S5 and S12 plays an important role in translational accuracy. In Saccharophagus degradans (strain 2-40 / ATCC 43961 / DSM 17024), this protein is Small ribosomal subunit protein uS4.